The sequence spans 188 residues: Peptidyl-tRNA hydrolase (188 aa).

Tyr15 contacts tRNA. Residue His20 is the Proton acceptor of the active site. Positions 64, 66, and 112 each coordinate tRNA.

Belongs to the PTH family. Monomer.

It localises to the cytoplasm. It catalyses the reaction an N-acyl-L-alpha-aminoacyl-tRNA + H2O = an N-acyl-L-amino acid + a tRNA + H(+). In terms of biological role, hydrolyzes ribosome-free peptidyl-tRNAs (with 1 or more amino acids incorporated), which drop off the ribosome during protein synthesis, or as a result of ribosome stalling. Catalyzes the release of premature peptidyl moieties from peptidyl-tRNA molecules trapped in stalled 50S ribosomal subunits, and thus maintains levels of free tRNAs and 50S ribosomes. This Cytophaga hutchinsonii (strain ATCC 33406 / DSM 1761 / CIP 103989 / NBRC 15051 / NCIMB 9469 / D465) protein is Peptidyl-tRNA hydrolase.